The chain runs to 339 residues: D-erythrose-4-phosphate dehydrogenase (339 aa).

NAD(+) is bound by residues 12-13 (RI) and Arg-81. Substrate-binding positions include 154–156 (SCT), Arg-200, 213–214 (TK), and Arg-236. Residue Cys-155 is the Nucleophile of the active site. Asn-318 is a binding site for NAD(+).

It belongs to the glyceraldehyde-3-phosphate dehydrogenase family. Epd subfamily. As to quaternary structure, homotetramer.

The protein localises to the cytoplasm. It catalyses the reaction D-erythrose 4-phosphate + NAD(+) + H2O = 4-phospho-D-erythronate + NADH + 2 H(+). The protein operates within cofactor biosynthesis; pyridoxine 5'-phosphate biosynthesis; pyridoxine 5'-phosphate from D-erythrose 4-phosphate: step 1/5. Functionally, catalyzes the NAD-dependent conversion of D-erythrose 4-phosphate to 4-phosphoerythronate. The polypeptide is D-erythrose-4-phosphate dehydrogenase (Shigella dysenteriae serotype 1 (strain Sd197)).